The chain runs to 56 residues: Large ribosomal subunit protein eL37 (56 aa).

Residues cysteine 19, cysteine 22, cysteine 34, and cysteine 37 each contribute to the Zn(2+) site. Residues 19–37 form a C4-type zinc finger; that stretch reads CRRCGSVSFNVHTKQCTSC.

This sequence belongs to the eukaryotic ribosomal protein eL37 family. Zn(2+) serves as cofactor.

In terms of biological role, binds to the 23S rRNA. The protein is Large ribosomal subunit protein eL37 (rpl37e) of Methanosarcina acetivorans (strain ATCC 35395 / DSM 2834 / JCM 12185 / C2A).